The following is a 247-amino-acid chain: 5'-nucleotidase SurE (247 aa).

A divalent metal cation-binding residues include Asp8, Asp9, Ser39, and Asn91.

This sequence belongs to the SurE nucleotidase family. It depends on a divalent metal cation as a cofactor.

It is found in the cytoplasm. It catalyses the reaction a ribonucleoside 5'-phosphate + H2O = a ribonucleoside + phosphate. Functionally, nucleotidase that shows phosphatase activity on nucleoside 5'-monophosphates. The protein is 5'-nucleotidase SurE of Ruthia magnifica subsp. Calyptogena magnifica.